We begin with the raw amino-acid sequence, 279 residues long: GDT1-like protein 3 (279 aa).

Residues 1-23 form the signal peptide; it reads MDPNPRLLILLVLLAFSATVAVA. 6 helical membrane passes run 64-84, 103-123, 135-155, 186-206, 224-244, and 258-278; these read VGPG…VSEI, IVLS…TGLG, TNSA…YIAW, FFGR…FLAE, AIGV…LAVI, and VATI…FYPP.

Belongs to the GDT1 family.

The protein resides in the membrane. In Oryza sativa subsp. japonica (Rice), this protein is GDT1-like protein 3.